We begin with the raw amino-acid sequence, 37 residues long: Large ribosomal subunit protein bL36 (37 aa).

Belongs to the bacterial ribosomal protein bL36 family.

The chain is Large ribosomal subunit protein bL36 from Sulfurovum sp. (strain NBC37-1).